The chain runs to 234 residues: MASSGQPKVVLLDIEGTVCPISFVKDVLFPYALSALPATLEAQWDKPEFSQYRDAFPAEHASSQEALTAHVKDLMSRDVKIAYLKSLQGYLWESGYKSGELKAPLFDDVAPKFVQWKKAGEEIMIYSSGSVAAQKLLFKHTNGHPADLIPEISDFFDTVNAGPKQEASSYQTILAAHPEFPEANSWLFLSDNVKEVEAAKQAGMQSFVVERPGNAELSAEDREKHRVIKTFAEI.

2 residues coordinate Mg(2+): D13 and E15. Residues 127–128 and K164 each bind substrate; that span reads SS. A Mg(2+)-binding site is contributed by D191.

The protein belongs to the HAD-like hydrolase superfamily. MasA/MtnC family. As to quaternary structure, monomer. The cofactor is Mg(2+).

The protein localises to the cytoplasm. The protein resides in the nucleus. It carries out the reaction 5-methylsulfanyl-2,3-dioxopentyl phosphate + H2O = 1,2-dihydroxy-5-(methylsulfanyl)pent-1-en-3-one + phosphate. The protein operates within amino-acid biosynthesis; L-methionine biosynthesis via salvage pathway; L-methionine from S-methyl-5-thio-alpha-D-ribose 1-phosphate: step 3/6. Its pathway is amino-acid biosynthesis; L-methionine biosynthesis via salvage pathway; L-methionine from S-methyl-5-thio-alpha-D-ribose 1-phosphate: step 4/6. In terms of biological role, bifunctional enzyme that catalyzes the enolization of 2,3-diketo-5-methylthiopentyl-1-phosphate (DK-MTP-1-P) into the intermediate 2-hydroxy-3-keto-5-methylthiopentenyl-1-phosphate (HK-MTPenyl-1-P), which is then dephosphorylated to form the acireductone 1,2-dihydroxy-3-keto-5-methylthiopentene (DHK-MTPene). The chain is Enolase-phosphatase E1 from Podospora anserina (strain S / ATCC MYA-4624 / DSM 980 / FGSC 10383) (Pleurage anserina).